The following is a 279-amino-acid chain: Ribonuclease Z (279 aa).

Zn(2+)-binding residues include histidine 61, histidine 63, aspartate 65, histidine 66, histidine 153, aspartate 176, and histidine 240. Aspartate 65 serves as the catalytic Proton acceptor.

Belongs to the RNase Z family. Homodimer. It depends on Zn(2+) as a cofactor.

The enzyme catalyses Endonucleolytic cleavage of RNA, removing extra 3' nucleotides from tRNA precursor, generating 3' termini of tRNAs. A 3'-hydroxy group is left at the tRNA terminus and a 5'-phosphoryl group is left at the trailer molecule.. Zinc phosphodiesterase, which displays some tRNA 3'-processing endonuclease activity. Probably involved in tRNA maturation, by removing a 3'-trailer from precursor tRNA. The sequence is that of Ribonuclease Z from Mycobacterium marinum (strain ATCC BAA-535 / M).